The following is a 238-amino-acid chain: Probable metal transport system ATP-binding protein TP_0035 (238 aa).

The ABC transporter domain maps to 10-231 (VLLQNVSFRY…LDMQKKDALA (222 aa)). 44–51 (GENGSGKS) serves as a coordination point for ATP.

It belongs to the ABC transporter superfamily.

The protein localises to the cell inner membrane. Its function is as follows. Part of an ATP-driven transport system TP_0034/TP_0035/TP_0036 for a metal. Probably responsible for energy coupling to the transport system. In Treponema pallidum (strain Nichols), this protein is Probable metal transport system ATP-binding protein TP_0035.